A 501-amino-acid polypeptide reads, in one-letter code: Putative matrix metalloproteinase (501 aa).

Positions 1–26 are cleaved as a signal peptide; the sequence is MMPQYERKQIIIHISCVIICVVVTLT. N-linked (GlcNAc...) asparagine; by host glycosylation is found at N48, N58, N61, N94, N116, and N163. H179 provides a ligand contact to Zn(2+). The active site involves E180. Zn(2+) contacts are provided by H183 and H189. N-linked (GlcNAc...) asparagine; by host glycans are attached at residues N192, N267, N280, and N291. The stretch at 311 to 356 is one Hemopexin repeat; that stretch reads TGHIDTISVIRGELYIFVDEYHWRFRSNGLLYSGYPLKTTHSWSVP. N379 and N493 each carry an N-linked (GlcNAc...) asparagine; by host glycan.

Belongs to the peptidase M10A family. The cofactor is Zn(2+).

The sequence is that of Putative matrix metalloproteinase from Trichoplusia ni ascovirus 2c (TnAV-2c).